Reading from the N-terminus, the 296-residue chain is Diaminopimelate epimerase (296 aa).

Residues Asn-17, Gln-49, and Asn-69 each coordinate substrate. Residue Cys-78 is the Proton donor of the active site. Substrate is bound by residues 79–80 (GN), Asn-171, Asn-205, and 223–224 (ER). The active-site Proton acceptor is Cys-232. Position 233–234 (233–234 (GT)) interacts with substrate.

This sequence belongs to the diaminopimelate epimerase family. Homodimer.

It localises to the cytoplasm. It catalyses the reaction (2S,6S)-2,6-diaminopimelate = meso-2,6-diaminopimelate. It participates in amino-acid biosynthesis; L-lysine biosynthesis via DAP pathway; DL-2,6-diaminopimelate from LL-2,6-diaminopimelate: step 1/1. Catalyzes the stereoinversion of LL-2,6-diaminopimelate (L,L-DAP) to meso-diaminopimelate (meso-DAP), a precursor of L-lysine and an essential component of the bacterial peptidoglycan. This Methylorubrum populi (strain ATCC BAA-705 / NCIMB 13946 / BJ001) (Methylobacterium populi) protein is Diaminopimelate epimerase.